Consider the following 469-residue polypeptide: Probable NADPH:adrenodoxin oxidoreductase, mitochondrial (469 aa).

Residues 1-38 (MLSRFIKRTYSTQTSSPVVGIIGSGPAAFYTAHRLLRN) constitute a mitochondrion transit peptide. FAD contacts are provided by alanine 27, glutamate 48, leucine 56, and valine 92. Residues 164–167 (HGNV), 208–209 (RR), and glutamate 220 contribute to the NADP(+) site. Residues tryptophan 375 and 382–384 (GVI) each bind FAD. Glycine 382 contributes to the NADP(+) binding site.

This sequence belongs to the ferredoxin--NADP reductase type 1 family. FAD serves as cofactor.

Its subcellular location is the mitochondrion inner membrane. It catalyses the reaction 2 reduced [adrenodoxin] + NADP(+) + H(+) = 2 oxidized [adrenodoxin] + NADPH. In terms of biological role, adrenodoxin reductase transfers electrons from NADPH to adrenodoxin, which is involved in heme A biosynthesis and in iron-sulfur cluster assembly. Involved in the electron transfer to heme A synthase etp1(cd), a heme protein that catalyzes the conversion of heme O to heme A. Required for the de novo synthesis of Fe-S clusters on iron sulfur cluster assembly protein isu1. Involved in electron delivery for Fe-S cluster synthesis. Essential for coenzyme Q biosynthesis. May be involved in the electron transfer required for the hydroxylation reaction performed by coq6. May play a role in cellular and mitochondrial iron homeostasis. The sequence is that of Probable NADPH:adrenodoxin oxidoreductase, mitochondrial (arh1) from Schizosaccharomyces pombe (strain 972 / ATCC 24843) (Fission yeast).